Here is a 387-residue protein sequence, read N- to C-terminus: MRLVKKNVIINGIYEAGVRYPEPANISYLWNFGFFSLVCLIIQLVSGILLAMHYSAHVDLAFNSIERLVREVDFGWLLRYVHANGASFFFIVVYVHMLRGLYFGSYQKPNAMLWVSGVVIFLLLIITGFLGYVLPWGQMSYWAATVITNLVTVIPVVGEDIVIWLWGGFNVDNPTLNRFFSLHYLCPFIIVGLVGLHIIFLRENGSTNPLGVKSNVDQIPFTPYFTIKDLFSFMIFLVLFFAFVFFAPNYLGHPDNYLMADSNVTPAHIVPEWYLLPFYAMLRSIPNKVLGVLALVLAIVVLAFLPFLTISEVRSSYFRKIHKHLFWSFLALCFFLGFLGSQPAAAPYLTCGLYSTILYFVYILVLFPYIYMVEKVIIKSILKTNKK.

A run of 8 helical transmembrane segments spans residues 32 to 52, 76 to 98, 113 to 133, 179 to 199, 225 to 245, 290 to 310, 325 to 345, and 353 to 373; these read FGFF…LLAM, WLLR…VHML, LWVS…LGYV, FFSL…LHII, FTIK…AFVF, LGVL…FLTI, LFWS…QPAA, and LYST…IYMV. Heme b is bound by residues histidine 82 and histidine 96. Heme b contacts are provided by histidine 183 and histidine 197.

It belongs to the cytochrome b family. As to quaternary structure, the main subunits of complex b-c1 are: cytochrome b, cytochrome c1 and the Rieske protein. It depends on heme b as a cofactor.

The protein resides in the mitochondrion inner membrane. In terms of biological role, component of the ubiquinol-cytochrome c reductase complex (complex III or cytochrome b-c1 complex) that is part of the mitochondrial respiratory chain. The b-c1 complex mediates electron transfer from ubiquinol to cytochrome c. Contributes to the generation of a proton gradient across the mitochondrial membrane that is then used for ATP synthesis. This Dictyostelium citrinum (Slime mold) protein is Cytochrome b (cytB).